Consider the following 506-residue polypeptide: Apolipoprotein N-acyltransferase (506 aa).

Helical transmembrane passes span 24–44 (LALA…MFYL), 58–78 (GWCY…VSIH), 85–105 (ALLA…FFAL), 125–145 (LAFA…LTGF), 162–182 (LAPV…AALL), and 192–212 (KSFL…GLAL). In terms of domain architecture, CN hydrolase spans 230-470 (MQGNIEQSMK…RGVLYGEVVP (241 aa)). Glutamate 269 (proton acceptor) is an active-site residue. Residue lysine 330 is part of the active site. The active-site Nucleophile is the cysteine 382. Residues 482 to 502 (SWPLAIVCLLLFGWALLAARI) form a helical membrane-spanning segment.

It belongs to the CN hydrolase family. Apolipoprotein N-acyltransferase subfamily.

It localises to the cell inner membrane. The enzyme catalyses N-terminal S-1,2-diacyl-sn-glyceryl-L-cysteinyl-[lipoprotein] + a glycerophospholipid = N-acyl-S-1,2-diacyl-sn-glyceryl-L-cysteinyl-[lipoprotein] + a 2-acyl-sn-glycero-3-phospholipid + H(+). Its pathway is protein modification; lipoprotein biosynthesis (N-acyl transfer). Catalyzes the phospholipid dependent N-acylation of the N-terminal cysteine of apolipoprotein, the last step in lipoprotein maturation. This Pseudomonas syringae pv. tomato (strain ATCC BAA-871 / DC3000) protein is Apolipoprotein N-acyltransferase.